The chain runs to 440 residues: RUN domain-containing protein 3A (440 aa).

The RUN domain maps to 52–184 (DDSSEEFVNF…IDFSFCLKGE (133 aa)). The segment at 213–233 (DDRESVGGSSSEDSSPEHPYL) is disordered. Residues 262–317 (YLEELVRLRETQLKNLEAENKRLTQRISEQAEQSLQEKHQLEGVILELQEQLTGLL) adopt a coiled-coil conformation. The tract at residues 374–402 (LSSESQRLDGKQDGEPWGPIGKDPTPSML) is disordered.

Belongs to the RUNDC3 family.

The chain is RUN domain-containing protein 3A (rundc3a) from Xenopus tropicalis (Western clawed frog).